We begin with the raw amino-acid sequence, 644 residues long: Arabinosyltransferase XEG113 (644 aa).

Topologically, residues 1-17 (MVEGWRNGFRDATNSKP) are cytoplasmic. Residues 18 to 38 (LFVTIYATVIIGVLVSSFYVF) form a helical; Signal-anchor for type II membrane protein membrane-spanning segment. Over 39 to 644 (SAIYSPTNGS…QTPEEDHPPL (606 aa)) the chain is Lumenal. N-linked (GlcNAc...) asparagine glycosylation is found at Asn-46 and Asn-70. The DXD motif signature appears at 226-228 (DTD). N-linked (GlcNAc...) asparagine glycosylation is found at Asn-446 and Asn-542.

It belongs to the glycosyltransferase 77 family.

Its subcellular location is the golgi apparatus membrane. Plays a role in the arabinosylation of cell wall components. Involved in the arabinosylation of extensin proteins in root hair cells. Extensins are structural glycoproteins present in cell walls and its arabinosylation is important for cell elongation, root hair cell development, lateral root development and root hair tip growth. This chain is Arabinosyltransferase XEG113, found in Arabidopsis thaliana (Mouse-ear cress).